The primary structure comprises 374 residues: Cathepsin W (374 aa).

The signal sequence occupies residues 1 to 21 (MAITVYLSCLLVLSMAGLAQG). The propeptide occupies 22–127 (IKSSLRSQDP…EVGSEEWGES (106 aa)). Intrachain disulfides connect Cys-150/Cys-191 and Cys-184/Cys-226. Cys-153 is a catalytic residue. The N-linked (GlcNAc...) asparagine glycan is linked to Asn-205. Active-site residues include His-291 and Asn-329. Asn-347 is a glycosylation site (N-linked (GlcNAc...) asparagine).

It belongs to the peptidase C1 family.

The protein localises to the endoplasmic reticulum. In terms of biological role, may have a specific function in the mechanism or regulation of T-cell cytolytic activity. The chain is Cathepsin W (CTSW) from Felis catus (Cat).